A 92-amino-acid chain; its full sequence is Small ribosomal subunit protein uS19 (92 aa).

The protein belongs to the universal ribosomal protein uS19 family.

Its function is as follows. Protein S19 forms a complex with S13 that binds strongly to the 16S ribosomal RNA. The chain is Small ribosomal subunit protein uS19 from Paramagnetospirillum magneticum (strain ATCC 700264 / AMB-1) (Magnetospirillum magneticum).